The following is a 114-amino-acid chain: DNA-directed RNA polymerases II, IV and V subunit 9A (114 aa).

Zn(2+) contacts are provided by Cys7, Cys10, Cys29, Cys32, Cys76, Cys79, Cys103, and Cys108. The TFIIS-type zinc-finger motif lies at 72 to 113 (KAVRCSKCQHREAVFFQATARGEEGMTLFFVCCNPNCGHRWR).

This sequence belongs to the archaeal RpoM/eukaryotic RPA12/RPB9/RPC11 RNA polymerase family. In terms of assembly, component of the RNA polymerase II, IV and V complexes. Interacts with NRPD1.

It localises to the nucleus. It is found in the nucleolus. Its function is as follows. DNA-dependent RNA polymerase catalyzes the transcription of DNA into RNA using the four ribonucleoside triphosphates as substrates. Component of RNA polymerase II which synthesizes mRNA precursors and many functional non-coding RNAs. Pol II is the central component of the basal RNA polymerase II transcription machinery. It is composed of mobile elements that move relative to each other. Component of RNA polymerases IV and V which mediate short-interfering RNAs (siRNA) accumulation and subsequent RNA-directed DNA methylation-dependent (RdDM) transcriptional gene silencing (TGS) of endogenous repeated sequences, including transposable elements. Required for RNA silencing. This Arabidopsis thaliana (Mouse-ear cress) protein is DNA-directed RNA polymerases II, IV and V subunit 9A (NRPB9A).